Here is a 324-residue protein sequence, read N- to C-terminus: Dolichyl-phosphate beta-glucosyltransferase (324 aa).

Topologically, residues 1-7 (MAPLLLQ) are lumenal. Residues 8 to 28 (LAVLGAALAAAALVLISIVAF) traverse the membrane as a helical; Signal-anchor for type II membrane protein segment. The Cytoplasmic portion of the chain corresponds to 29-324 (TTATKMPALH…WRLEQTRKMN (296 aa)).

It belongs to the glycosyltransferase 2 family. In terms of tissue distribution, expressed in pancreas, placenta, liver, heart, brain, kidney, skeletal muscle, and lung.

Its subcellular location is the endoplasmic reticulum membrane. It carries out the reaction a di-trans,poly-cis-dolichyl phosphate + UDP-alpha-D-glucose = a di-trans,poly-cis-dolichyl beta-D-glucosyl phosphate + UDP. The protein operates within protein modification; protein glycosylation. Functionally, dolichyl-phosphate beta-glucosyltransferase that operates in the biosynthetic pathway of dolichol-linked oligosaccharides, the glycan precursors employed in protein asparagine (N)-glycosylation. The assembly of dolichol-linked oligosaccharides begins on the cytosolic side of the endoplasmic reticulum membrane and finishes in its lumen. The sequential addition of sugars to dolichol pyrophosphate produces dolichol-linked oligosaccharides containing fourteen sugars, including two GlcNAcs, nine mannoses and three glucoses. Once assembled, the oligosaccharide is transferred from the lipid to nascent proteins by oligosaccharyltransferases. Dolichyl-phosphate beta-glucosyltransferase produces dolichyl beta-D-glucosyl phosphate/Dol-P-Glc, the glucose donor substrate used sequentially by ALG6, ALG8 and ALG10 to add glucose residues on top of the Man(9)GlcNAc(2)-PP-Dol structure. These are the three last steps in the biosynthetic pathway of dolichol-linked oligosaccharides to produce Glc(3)Man(9)GlcNAc(2)-PP-Dol. The enzyme is most probably active on the cytoplasmic side of the endoplasmic reticulum while its product Dol-P-Glc is the substrate for ALG6, ALG8 and ALG11 in the lumen of the endoplasmic reticulum. In Homo sapiens (Human), this protein is Dolichyl-phosphate beta-glucosyltransferase.